Here is a 682-residue protein sequence, read N- to C-terminus: MSIFGSILSLQDAINRFPQFEYQINRLEKEQKDTEAASRASFRKHFVRQCQELHRQLDDHRNRIEKAKTDETYKKENALEQLDKLKQRLTALSPEKEQLSFSVSVDSQSEEEKPKMAAIGRRKSTMYNDDESEDSDNDSEIIETDVQLDDPLPSQPQPPQQQHQQPQPKPRQPITITKPLESKTLNERQELDEVISRLQNPSRGDSGEVMEPVVVRGNVFVAIDSWDAEAEGDLELIKGKKYRITQTRSDGWWTALDEYGQRGLVPKTYLQHVKEKPKNVPSKVSSRLGVRDSVIGISTTTDPSRREANRQASRVDDCLGKAYDNDTHLSLVCHMAPRLSTSNIGFHDLFWSHYKDQVYKRTVHISKIIRLVRFEKMPLIEHKALVRMALVDITNPKSTQIVSNVHTLVPRVKSSTWYFEKKESQTRSCIEFSDFVLRSNYRSPTVVLVVEASHLVKTQIGIEEKSLGHTYLRLIIDDKAVPSRTNVLYLDDEVMTKMKLPEASKRRVLVQVMDVPKDKVSYVDSLPDVIVFNALYLPFFHFYRRRAGTILIRDNRNPLSAEFISDPLLSVFPFVCDQHDIMDIMLKIWKTKKKVLAKKNEAEQTAEFFQTFLHTAFFIHGIRMISYDVKDDLTLSIRQQTMQRFVDALNKGLFKQFIADQQCKPINIIDYSLDLLGNHSID.

Positions 10–100 (LQDAINRFPQ…ALSPEKEQLS (91 aa)) form a coiled coil. Residues 96-188 (KEQLSFSVSV…PLESKTLNER (93 aa)) are disordered. Residues 128–148 (NDDESEDSDNDSEIIETDVQL) show a composition bias toward acidic residues. Residues 215–275 (VRGNVFVAID…PKTYLQHVKE (61 aa)) form the SH3 domain.

This sequence belongs to the nephrocystin-1 family. In terms of tissue distribution, expressed in ciliated sensory neurons of the head (amphid neurons) and the tail in hermaphrodites (phasmid neurons) and males (sensory ray neurons).

In terms of biological role, plays a role in the extension of dendrites from phasmid ciliated sensory neurons. May be necessary for initial assembly of the cilium. The protein is Nephrocystin-1-like protein of Caenorhabditis elegans.